Here is a 216-residue protein sequence, read N- to C-terminus: UPF0502 protein VC0395_0676/VC395_A0574 (216 aa).

The protein belongs to the UPF0502 family.

The protein is UPF0502 protein VC0395_0676/VC395_A0574 of Vibrio cholerae serotype O1 (strain ATCC 39541 / Classical Ogawa 395 / O395).